A 418-amino-acid chain; its full sequence is Serpin A3-8 (418 aa).

An N-terminal signal peptide occupies residues 1-25 (MRAERMSPLLALGLLVSGLCSRVHC). 4 N-linked (GlcNAc...) asparagine glycosylation sites follow: asparagine 103, asparagine 183, asparagine 233, and asparagine 268.

It belongs to the serpin family. As to quaternary structure, homodimer.

The protein resides in the cytoplasmic vesicle. It is found in the secretory vesicle. The protein localises to the chromaffin granule. Its subcellular location is the secreted. Functionally, serine protease inhibitor. This is Serpin A3-8 from Bos taurus (Bovine).